The chain runs to 71 residues: SRY-related protein LG28 (71 aa).

A DNA-binding region (HMG box) is located at residues V1–K68.

The protein localises to the nucleus. The protein is SRY-related protein LG28 of Eublepharis macularius (Leopard gecko).